Here is a 303-residue protein sequence, read N- to C-terminus: MALDFLAGCAGGVAGVLVGHPFDTVKVRLQVQSVEKPQYRGTLHCFKSIIKQESVLGLYKGLGSPLMGLTFINALVFGVQGNTLRALGHDSPLNQFLAGAAAGAIQCVICCPMELAKTRLQLQDAGPARTYKGSLDCLAQIYGHEGLRGVNRGMVSTLLRETPSFGVYFLTYDALTRALGCEPGDRLLVPKLLLAGGTSGIVSWLSTYPVDVVKSRLQADGLRGAPRYRGILDCVHQSYRAEGWRVFTRGLASTLLRAFPVNAATFATVTVVLTYARGEEAGPEGEAVPAAPAGPALAQPSSL.

6 helical membrane passes run 2-22, 61-81, 96-116, 153-172, 187-207, and 255-275; these read ALDFLAGCAGGVAGVLVGHPF, GLGSPLMGLTFINALVFGVQG, FLAGAAAGAIQCVICCPMELA, GMVSTLLRETPSFGVYFLTY, LLVPKLLLAGGTSGIVSWLST, and LLRAFPVNAATFATVTVVLTY. 3 Solcar repeats span residues 2–86, 90–178, and 185–275; these read ALDF…TLRA, DSPL…LTRA, and DRLL…VLTY. The interval 282 to 303 is disordered; the sequence is GPEGEAVPAAPAGPALAQPSSL. A compositionally biased stretch (low complexity) spans 284-303; the sequence is EGEAVPAAPAGPALAQPSSL.

Belongs to the mitochondrial carrier (TC 2.A.29) family.

The protein resides in the mitochondrion inner membrane. It catalyses the reaction L-lysine(out) + L-arginine(in) = L-lysine(in) + L-arginine(out). The catalysed reaction is L-histidine(out) + L-arginine(in) = L-histidine(in) + L-arginine(out). It carries out the reaction L-ornithine(in) + L-arginine(out) = L-ornithine(out) + L-arginine(in). The enzyme catalyses L-homoarginine(in) + L-arginine(out) = L-homoarginine(out) + L-arginine(in). It catalyses the reaction N(omega)-methyl-L-arginine(in) + L-arginine(out) = N(omega)-methyl-L-arginine(out) + L-arginine(in). The catalysed reaction is L-arginine(in) = L-arginine(out). It carries out the reaction L-lysine(in) = L-lysine(out). The enzyme catalyses L-ornithine(in) = L-ornithine(out). It catalyses the reaction L-histidine(out) = L-histidine(in). Its function is as follows. Mitochondrial transporter of arginine, lysine, homoarginine, methylarginine and, to a much lesser extent, ornithine and histidine. Does not transport carnitine nor acylcarnitines. Functions by both counter-exchange and uniport mechanisms. Plays a physiological role in the import of basic amino acids into mitochondria for mitochondrial protein synthesis and amino acid degradation. This chain is Mitochondrial basic amino acids transporter, found in Homo sapiens (Human).